We begin with the raw amino-acid sequence, 202 residues long: Large ribosomal subunit protein uL13 (202 aa).

The protein belongs to the universal ribosomal protein uL13 family.

This is Large ribosomal subunit protein uL13 from Caenorhabditis elegans.